The sequence spans 383 residues: Transposase InsI for insertion sequence element IS30A (383 aa).

The 167-residue stretch at 213 to 379 (VNGTPIHERS…TPKEIIERGV (167 aa)) folds into the Integrase catalytic domain.

This sequence belongs to the transposase IS30 family.

Functionally, required for the transposition of the insertion element. This chain is Transposase InsI for insertion sequence element IS30A (insI1), found in Escherichia coli (strain K12).